Reading from the N-terminus, the 195-residue chain is Peptidyl-tRNA hydrolase (195 aa).

TRNA is bound at residue Tyr-14. The active-site Proton acceptor is the His-19. 2 residues coordinate tRNA: Tyr-64 and Asn-66.

The protein belongs to the PTH family. In terms of assembly, monomer.

It is found in the cytoplasm. It carries out the reaction an N-acyl-L-alpha-aminoacyl-tRNA + H2O = an N-acyl-L-amino acid + a tRNA + H(+). Functionally, hydrolyzes ribosome-free peptidyl-tRNAs (with 1 or more amino acids incorporated), which drop off the ribosome during protein synthesis, or as a result of ribosome stalling. In terms of biological role, catalyzes the release of premature peptidyl moieties from peptidyl-tRNA molecules trapped in stalled 50S ribosomal subunits, and thus maintains levels of free tRNAs and 50S ribosomes. The sequence is that of Peptidyl-tRNA hydrolase from Desulforudis audaxviator (strain MP104C).